We begin with the raw amino-acid sequence, 927 residues long: Protein LONGIFOLIA 1 (927 aa).

Disordered stretches follow at residues 41–198, 210–257, 460–588, and 605–626; these read TGDE…EGRR, YDER…GHRR, AQKV…SDSN, and YERN…DLGM. The span at 86-114 shows a compositional bias: low complexity; it reads SSESSSRLSFSSSPCSSSFSSADISTTAS. The segment covering 115–125 has biased composition (polar residues); the sequence is QFEQPGLSNGE. The span at 146–165 shows a compositional bias: basic and acidic residues; that stretch reads DIRELVRSSIHKETRTRDEE. Positions 182 to 193 are enriched in polar residues; it reads KESSPSRNSNEW. A compositionally biased stretch (basic and acidic residues) spans 210-226; the sequence is YDERETRKTGAKLKETP. Residues 232 to 245 show a composition bias toward low complexity; sequence SRSNSFRSARSSCS. Polar residues-rich tracts occupy residues 483–500 and 538–553; these read QTES…QSKS and NKNQ…TESA. 2 stretches are compositionally biased toward basic and acidic residues: residues 569–584 and 605–616; these read SEDR…RSLR and YERNSDITEQHT.

As to quaternary structure, interacts (via C-terminus) with TON1A and TON1B. As to expression, expressed in roots, petioles, leaf blades and floral organs.

The protein localises to the nucleus. Its function is as follows. In association with LNG2, regulates leaf morphology by promoting longitudinal polar cell elongation independently of ROT3. This Arabidopsis thaliana (Mouse-ear cress) protein is Protein LONGIFOLIA 1 (LNG1).